Reading from the N-terminus, the 105-residue chain is Ig lambda chain C region (105 aa).

The region spanning 6–100 (PSVILFPPSS…EGHTVEKSLA (95 aa)) is the Ig-like domain. The cysteines at positions 27 and 86 are disulfide-linked.

This chain is Ig lambda chain C region, found in Oryctolagus cuniculus (Rabbit).